The sequence spans 84 residues: Large ribosomal subunit protein bL31B (84 aa).

This sequence belongs to the bacterial ribosomal protein bL31 family. Type B subfamily. Part of the 50S ribosomal subunit.

This is Large ribosomal subunit protein bL31B from Rhodococcus opacus (strain B4).